The chain runs to 244 residues: Small ribosomal subunit protein uS2 (244 aa).

This sequence belongs to the universal ribosomal protein uS2 family.

The chain is Small ribosomal subunit protein uS2 from Halalkalibacterium halodurans (strain ATCC BAA-125 / DSM 18197 / FERM 7344 / JCM 9153 / C-125) (Bacillus halodurans).